We begin with the raw amino-acid sequence, 1953 residues long: Putative surface-exposed virulence protein BigA (1953 aa).

The first 27 residues, Met-1–Ala-27, serve as a signal peptide directing secretion. Disordered regions lie at residues Asn-31–Ala-50, Gly-88–Asn-258, and Thr-1496–Leu-1517. Residues Pro-101–Asn-103 form a 1; truncated repeat. The segment at Pro-101–Ser-252 is 15 X 11 AA tandem repeats. One copy of the 2; truncated repeat lies at Gly-104 to Gly-113. One copy of the 3; truncated repeat lies at Gly-114–Gly-122. A run of 11 repeats spans residues Gly-123–Asp-133, Asp-134–Asp-144, Asp-145–Asp-155, Asp-156–Asp-166, Asp-167–Asp-177, Gly-178–Asp-188, Asp-189–Asp-199, Asp-200–Asp-210, Asp-211–Asp-221, Asp-222–Asp-232, and Asp-233–Asp-243. 2 stretches are compositionally biased toward acidic residues: residues Asp-141–Asp-177 and Asp-185–Pro-249. The 15; truncated repeat unit spans residues Asp-244–Ser-252. The Autotransporter domain maps to Ser-1649 to Phe-1952.

This Salmonella typhimurium (strain LT2 / SGSC1412 / ATCC 700720) protein is Putative surface-exposed virulence protein BigA (bigA).